The sequence spans 498 residues: Polygalacturonan/rhamnogalacturonan-binding protein YtcQ (498 aa).

A signal peptide spans 1–22 (MGNKWRVLLIVLVLALGGVLAG). The N-palmitoyl cysteine moiety is linked to residue Cys23. Cys23 carries the S-diacylglycerol cysteine lipid modification.

This sequence belongs to the bacterial solute-binding protein 1 family. The complex is probably composed of two ATP-binding proteins (MsmX), two transmembrane proteins (YtcP and YteP) and a solute-binding protein (YtcQ).

Its subcellular location is the cell membrane. Involved in pectin degradation. Part of the ABC transporter complex YtcQP-YteP involved in the uptake of polygalacturonan and rhamnogalacturonan type I. The chain is Polygalacturonan/rhamnogalacturonan-binding protein YtcQ (ytcQ) from Bacillus subtilis (strain 168).